The following is a 159-amino-acid chain: Ribosomal RNA large subunit methyltransferase H (159 aa).

S-adenosyl-L-methionine-binding positions include glycine 108 and 127-132; that span reads FGKLTM.

This sequence belongs to the RNA methyltransferase RlmH family. As to quaternary structure, homodimer.

It localises to the cytoplasm. It carries out the reaction pseudouridine(1915) in 23S rRNA + S-adenosyl-L-methionine = N(3)-methylpseudouridine(1915) in 23S rRNA + S-adenosyl-L-homocysteine + H(+). Its function is as follows. Specifically methylates the pseudouridine at position 1915 (m3Psi1915) in 23S rRNA. The sequence is that of Ribosomal RNA large subunit methyltransferase H from Lactobacillus helveticus (strain DPC 4571).